The primary structure comprises 202 residues: Small ribosomal subunit protein uS4 (202 aa).

The disordered stretch occupies residues 22 to 43; that stretch reads TRKSARRAYPPGQHGQNRKKRS. In terms of domain architecture, S4 RNA-binding spans 90–152; that stretch reads MRLDNTVFRL…APSRKLVENN (63 aa).

It belongs to the universal ribosomal protein uS4 family. As to quaternary structure, part of the 30S ribosomal subunit. Contacts protein S5. The interaction surface between S4 and S5 is involved in control of translational fidelity.

In terms of biological role, one of the primary rRNA binding proteins, it binds directly to 16S rRNA where it nucleates assembly of the body of the 30S subunit. Functionally, with S5 and S12 plays an important role in translational accuracy. In Nostoc sp. (strain PCC 7120 / SAG 25.82 / UTEX 2576), this protein is Small ribosomal subunit protein uS4.